Here is a 120-residue protein sequence, read N- to C-terminus: Large ribosomal subunit protein bL19 (120 aa).

Belongs to the bacterial ribosomal protein bL19 family.

In terms of biological role, this protein is located at the 30S-50S ribosomal subunit interface and may play a role in the structure and function of the aminoacyl-tRNA binding site. The polypeptide is Large ribosomal subunit protein bL19 (Chlorobium limicola (strain DSM 245 / NBRC 103803 / 6330)).